The following is a 237-amino-acid chain: Phosphoribosylaminoimidazole-succinocarboxamide synthase (237 aa).

Belongs to the SAICAR synthetase family.

The catalysed reaction is 5-amino-1-(5-phospho-D-ribosyl)imidazole-4-carboxylate + L-aspartate + ATP = (2S)-2-[5-amino-1-(5-phospho-beta-D-ribosyl)imidazole-4-carboxamido]succinate + ADP + phosphate + 2 H(+). It participates in purine metabolism; IMP biosynthesis via de novo pathway; 5-amino-1-(5-phospho-D-ribosyl)imidazole-4-carboxamide from 5-amino-1-(5-phospho-D-ribosyl)imidazole-4-carboxylate: step 1/2. In Erwinia tasmaniensis (strain DSM 17950 / CFBP 7177 / CIP 109463 / NCPPB 4357 / Et1/99), this protein is Phosphoribosylaminoimidazole-succinocarboxamide synthase.